Reading from the N-terminus, the 534-residue chain is Glucomannan 4-beta-mannosyltransferase 2 (534 aa).

Residues 36–56 (VIVPLLQLAVYICLLMSVMLL) form a helical membrane-spanning segment. D136 is an active-site residue. D195 and D197 together coordinate substrate. D289 is an active-site residue. 4 consecutive transmembrane segments (helical) span residues 368–388 (IIAH…TILV), 404–426 (IITI…WILF), 483–503 (LNTL…YDFV), and 509–529 (YFIY…GWIG).

The protein belongs to the glycosyltransferase 2 family. Plant cellulose synthase-like A subfamily.

Its subcellular location is the golgi apparatus membrane. It carries out the reaction GDP-mannose + (glucomannan)n = GDP + (glucomannan)n+1.. In terms of biological role, possesses glucomannan synthase and mannan synthase activities in vitro. Mannan synthase consists of a 4-beta-mannosyltransferase activity on mannan using GDP-mannose. The beta-1,4-mannan product is the backbone for galactomannan synthesis by galactomannan galactosyltransferase. Galactomannan is a noncellulosic polysaccharides of plant cell wall. The protein is Glucomannan 4-beta-mannosyltransferase 2 of Arabidopsis thaliana (Mouse-ear cress).